Consider the following 123-residue polypeptide: Large ribosomal subunit protein uL18 (123 aa).

This sequence belongs to the universal ribosomal protein uL18 family. In terms of assembly, part of the 50S ribosomal subunit; part of the 5S rRNA/L5/L18/L25 subcomplex. Contacts the 5S and 23S rRNAs.

Its function is as follows. This is one of the proteins that bind and probably mediate the attachment of the 5S RNA into the large ribosomal subunit, where it forms part of the central protuberance. In Chlamydia pneumoniae (Chlamydophila pneumoniae), this protein is Large ribosomal subunit protein uL18.